The chain runs to 240 residues: Ribonuclease 3 (240 aa).

An RNase III domain is found at 4–134; sequence SRQPLLDALG…LLGAIYLQHG (131 aa). A Mg(2+)-binding site is contributed by Glu-44. The active site involves Asp-48. Asp-120 and Glu-123 together coordinate Mg(2+). The active site involves Glu-123. A DRBM domain is found at 161–229; that stretch reads DWKTSLQELT…AAAAWKALEV (69 aa).

The protein belongs to the ribonuclease III family. Homodimer. Requires Mg(2+) as cofactor.

It is found in the cytoplasm. The enzyme catalyses Endonucleolytic cleavage to 5'-phosphomonoester.. In terms of biological role, digests double-stranded RNA. Involved in the processing of primary rRNA transcript to yield the immediate precursors to the large and small rRNAs (23S and 16S). Processes some mRNAs, and tRNAs when they are encoded in the rRNA operon. Processes pre-crRNA and tracrRNA of type II CRISPR loci if present in the organism. This Mycobacterium bovis (strain ATCC BAA-935 / AF2122/97) protein is Ribonuclease 3.